Reading from the N-terminus, the 362-residue chain is Peptide chain release factor 1 (362 aa).

Gln237 carries the post-translational modification N5-methylglutamine. Residues 289–308 (AAEISDTRRNLLGSGDRSDR) are disordered.

Belongs to the prokaryotic/mitochondrial release factor family. Post-translationally, methylated by PrmC. Methylation increases the termination efficiency of RF1.

It localises to the cytoplasm. Functionally, peptide chain release factor 1 directs the termination of translation in response to the peptide chain termination codons UAG and UAA. The polypeptide is Peptide chain release factor 1 (Vibrio cholerae serotype O1 (strain ATCC 39541 / Classical Ogawa 395 / O395)).